Here is a 233-residue protein sequence, read N- to C-terminus: MVVEDALKTSASEDQAKTETNPKPREEDDEPEEGEIVGDEESASKPSKGIAPESHALEHSWTFWFDSPAAKSAKTKQEDWGSSIRPIYTFSTVEEFWSIYNNIRHPSKLAIGTDFHCFKYKIEPKWEDPVCANGGKWTVTLPKGKSDTSWLYTLLGMIGEQFDHGDEICGAVVNVRNRQEKISIWTKNAINEAAQLSIGKQWKGLLDYNETIGFIFHEDAMRHERSAKNKYVV.

Residues 1–51 (MVVEDALKTSASEDQAKTETNPKPREEDDEPEEGEIVGDEESASKPSKGIA) are disordered. Basic and acidic residues predominate over residues 14–26 (DQAKTETNPKPRE). The segment covering 27–41 (EDDEPEEGEIVGDEE) has biased composition (acidic residues). 2 EIF4G-binding regions span residues 55–58 (HALE) and 65–104 (FDSPAAKSAKTKQEDWGSSIRPIYTFSTVEEFWSIYNNIR). Residues 76 to 81 (KQEDWG), lysine 108, and 126 to 127 (WE) contribute to the mRNA site. Residues cysteine 131 and cysteine 169 are joined by a disulfide bond. Positions 152–161 (YTLLGMIGEQ) are EIF4G-binding. MRNA-binding positions include 176 to 181 (RNRQEK) and 221 to 225 (MRHER).

Belongs to the eukaryotic initiation factor 4E family. EIF4F is a multi-subunit complex, the composition of which varies with external and internal environmental conditions. It is composed of at least EIF4A, EIF4E and EIF4G. EIF4E is also known to interact with other partners. In higher plants two isoforms of EIF4F have been identified, named isoform EIF4F and isoform EIF(iso)4F. Isoform EIF4F has subunits p220 and p26, whereas isoform EIF(iso)4F has subunits p82 and p28. In terms of assembly, (Microbial infection) Does not interact with the VPg of Plum pox virus (PPV) strain D. Post-translationally, according to the redox status, the Cys-131-Cys-169 disulfide bridge may have a role in regulating protein function by affecting its ability to bind capped mRNA. As to expression, mostly expressed in leaves, flower buds, leaf buds and anthers, to a lower extent in roots, stems and green immature fruit, and, at low levels, in petals.

The protein localises to the nucleus. It is found in the cytoplasm. Functionally, component of the protein complex eIF4F, which is involved in the recognition of the mRNA cap, ATP-dependent unwinding of 5'-terminal secondary structure and recruitment of mRNA to the ribosome. Recognizes and binds the 7-methylguanosine-containing mRNA cap during an early step in the initiation of protein synthesis and facilitates ribosome binding by inducing the unwinding of the mRNAs secondary structures. In terms of biological role, (Microbial infection) Not involved in the plum pox virus (PPV) strain D infection process. The polypeptide is Eukaryotic translation initiation factor 4E-1 (Prunus domestica (Garden plum)).